The sequence spans 714 residues: Fatty acid oxidation complex subunit alpha (714 aa).

An enoyl-CoA hydratase region spans residues methionine 1–proline 190. The tract at residues alanine 306 to glutamine 714 is 3-hydroxyacyl-CoA dehydrogenase.

It in the N-terminal section; belongs to the enoyl-CoA hydratase/isomerase family. In the central section; belongs to the 3-hydroxyacyl-CoA dehydrogenase family. In terms of assembly, heterotetramer of two alpha chains (FadJ) and two beta chains (FadI).

The protein resides in the cytoplasm. It carries out the reaction a (3S)-3-hydroxyacyl-CoA = a (2E)-enoyl-CoA + H2O. The catalysed reaction is a 4-saturated-(3S)-3-hydroxyacyl-CoA = a (3E)-enoyl-CoA + H2O. The enzyme catalyses a (3S)-3-hydroxyacyl-CoA + NAD(+) = a 3-oxoacyl-CoA + NADH + H(+). It catalyses the reaction (3S)-3-hydroxybutanoyl-CoA = (3R)-3-hydroxybutanoyl-CoA. It functions in the pathway lipid metabolism; fatty acid beta-oxidation. In terms of biological role, catalyzes the formation of a hydroxyacyl-CoA by addition of water on enoyl-CoA. Also exhibits 3-hydroxyacyl-CoA epimerase and 3-hydroxyacyl-CoA dehydrogenase activities. This Escherichia coli (strain SE11) protein is Fatty acid oxidation complex subunit alpha.